The chain runs to 759 residues: Short transient receptor potential channel 1 (759 aa).

Residues 1 to 30 form a disordered region; the sequence is MMAALYPSTDLSGVSSSSLPSSPSSSSPNE. The Cytoplasmic portion of the chain corresponds to 1–311; sequence MMAALYPSTD…FGQMSGYRRK (311 aa). Over residues 15-28 the composition is skewed to low complexity; that stretch reads SSSSLPSSPSSSSP. 3 ANK repeats span residues 46–75, 83–109, and 124–146; these read LNEKLFLLACDKGDYYMVKKILEENSSGDL, LGRNAVTITIENESLDILQLLLDYGCQ, and MDVAPVILAAHRNNYEILTMLLK. Residues histidine 155, cysteine 159, cysteine 161, and cysteine 164 each contribute to the Zn(2+) site. The discontinuously helical intramembrane region spans 312–345; that stretch reads PTCKKIMTVLTVGIFWPVLSLCYLIAPKSQFGRI. Over 346 to 352 the chain is Cytoplasmic; it reads IHTPFMK. The helical transmembrane segment at 353–370 threads the bilayer; the sequence is FIIHGASYFTFLLLLNLY. Topologically, residues 371 to 388 are extracellular; sequence SLVYNEDKKNTMGPALER. A helical transmembrane segment spans residues 389-405; the sequence is IDYLLILWIIGMIWSDI. The Cytoplasmic segment spans residues 406–421; sequence KRLWYEGLEDFLEESR. Residues 422–441 form a helical membrane-spanning segment; it reads NQLSFVMNSLYLATFALKVV. Over 442–462 the chain is Extracellular; it reads AHNKFHDFADRKDWDAFHPTL. A helical transmembrane segment spans residues 463–483; sequence VAEGLFAFANVLSYLRLFFMY. Topologically, residues 484–502 are cytoplasmic; that stretch reads TTSSILGPLQISMGQMLQD. The chain crosses the membrane as a helical span at residues 503-524; the sequence is FGKFLGMFLLVLFSFTIGLTQL. Residues 525–589 lie on the Extracellular side of the membrane; sequence YDKGYTSKEQ…GEELQSFVGA (65 aa). A disulfide bridge links cysteine 537 with cysteine 542. Residues 590–610 traverse the membrane as a helical segment; it reads VIVGTYNVVVVIVLTKLLVAM. The Cytoplasmic portion of the chain corresponds to 611 to 759; it reads LHKSFQLIAN…SKYAMFYPKN (149 aa).

Belongs to the transient receptor (TC 1.A.4) family. STrpC subfamily. TRPC1 sub-subfamily. As to quaternary structure, heterotetramer with TRPC4 and/or TRPC5. Forms a heteromeric ion channel with TRPC4, with a 1:3 TRPC1:TRPC4 stoichiometry. Unlike other TRP channel proteins, does not form a homomeric channel. Interacts with TRPC4AP. Interacts with ITPR3. Interacts with MX1 and RNF24. Interacts with FKBP4. Interacts with PLSCR1. Interacts with PKD2L2. Forms a heterotetramer with PKD2 with a 2:2 stoichiometry; has distinct channel properties separate from PKD2 or TRPC1 homomers alone. Activation of PRKCA induces phosphorylation of TRPC1 and subsequent Ca2+ entry into cells. Expressed in brain, hippocampus, amygdala, Purkinje cells and single neurons in the cortex and striatum.

It is found in the cell membrane. It catalyses the reaction Ca(2+)(in) = Ca(2+)(out). The enzyme catalyses Na(+)(in) = Na(+)(out). It carries out the reaction Li(+)(in) = Li(+)(out). The catalysed reaction is Cs(+)(in) = Cs(+)(out). Its activity is regulated as follows. May be operated by a phosphatidylinositol second messenger system activated by receptor tyrosine kinases or G-protein coupled receptors. Also activated by intracellular calcium store depletion. Its function is as follows. Forms a receptor-activated non-selective calcium permeant cation channel. Forms a heteromeric ion channel with TRPC4 or TRPC5 that has reduced calcium permeability compared to the homomeric TRPC4 or TRPC5 channel. Also permeable to monovalent ions including sodium, lithium and cesium ions. This Rattus norvegicus (Rat) protein is Short transient receptor potential channel 1 (Trpc1).